The primary structure comprises 383 residues: Putative protein FAM157A (383 aa).

2 disordered regions span residues 1–21 (MGPL…PLPK) and 177–254 (ATAR…PLGR).

It belongs to the FAM157 family.

In Homo sapiens (Human), this protein is Putative protein FAM157A (FAM157A).